The following is a 1155-amino-acid chain: uncharacterized protein (1155 aa).

Residues Met1 to Gly19 form the signal peptide. Cys20 carries N-palmitoyl cysteine lipidation. A lipid anchor (S-diacylglycerol cysteine) is attached at Cys20. 4 helical membrane passes run Val291 to Ile311, Leu395 to Phe415, Ala424 to Phe444, and Ile459 to Ile479.

The protein belongs to the TrbL/VirB6 family.

The protein resides in the cell membrane. This is an uncharacterized protein from Rickettsia felis (strain ATCC VR-1525 / URRWXCal2) (Rickettsia azadi).